A 298-amino-acid polypeptide reads, in one-letter code: Quinolinate synthase (298 aa).

Residues His19 and Ser36 each coordinate iminosuccinate. [4Fe-4S] cluster is bound at residue Cys81. Iminosuccinate contacts are provided by residues 107 to 109 (YVN) and Ser124. [4Fe-4S] cluster is bound at residue Cys168. Residues 193 to 195 (HPE) and Thr210 each bind iminosuccinate. Cys254 provides a ligand contact to [4Fe-4S] cluster.

The protein belongs to the quinolinate synthase family. Type 2 subfamily. [4Fe-4S] cluster is required as a cofactor.

The protein resides in the cytoplasm. The enzyme catalyses iminosuccinate + dihydroxyacetone phosphate = quinolinate + phosphate + 2 H2O + H(+). The protein operates within cofactor biosynthesis; NAD(+) biosynthesis; quinolinate from iminoaspartate: step 1/1. With respect to regulation, inhibited by 4,5 dithiohydroxyphthalic acid (DTHPA) analogs, which bind to the catalytic iron site of the [4Fe-4S] cluster. Its function is as follows. Catalyzes the condensation of iminoaspartate with dihydroxyacetone phosphate to form quinolinate. This chain is Quinolinate synthase, found in Thermotoga maritima (strain ATCC 43589 / DSM 3109 / JCM 10099 / NBRC 100826 / MSB8).